A 304-amino-acid polypeptide reads, in one-letter code: Tyrosine recombinase XerD (304 aa).

Residues 1–92 form the Core-binding (CB) domain; it reads MKARVLAKTW…VARGLHKFAL (92 aa). Positions 113 to 298 constitute a Tyr recombinase domain; that stretch reads HLPDTLSINE…TADSLREVWR (186 aa). Active-site residues include Arg-156, Lys-180, His-250, Arg-253, and His-276. Tyr-285 functions as the O-(3'-phospho-DNA)-tyrosine intermediate in the catalytic mechanism.

Belongs to the 'phage' integrase family. XerD subfamily. Forms a cyclic heterotetrameric complex composed of two molecules of XerC and two molecules of XerD.

It localises to the cytoplasm. Site-specific tyrosine recombinase, which acts by catalyzing the cutting and rejoining of the recombining DNA molecules. The XerC-XerD complex is essential to convert dimers of the bacterial chromosome into monomers to permit their segregation at cell division. It also contributes to the segregational stability of plasmids. The protein is Tyrosine recombinase XerD of Corynebacterium glutamicum (strain ATCC 13032 / DSM 20300 / JCM 1318 / BCRC 11384 / CCUG 27702 / LMG 3730 / NBRC 12168 / NCIMB 10025 / NRRL B-2784 / 534).